The following is a 164-amino-acid chain: Large ribosomal subunit protein uL11 (164 aa).

Belongs to the universal ribosomal protein uL11 family. Part of the ribosomal stalk of the 50S ribosomal subunit. Interacts with L10 and the large rRNA to form the base of the stalk. L10 forms an elongated spine to which L12 dimers bind in a sequential fashion forming a multimeric L10(L12)X complex.

Functionally, forms part of the ribosomal stalk which helps the ribosome interact with GTP-bound translation factors. The sequence is that of Large ribosomal subunit protein uL11 from Pyrococcus horikoshii (strain ATCC 700860 / DSM 12428 / JCM 9974 / NBRC 100139 / OT-3).